The sequence spans 213 residues: MKKVLLLLFVLTIGLALSACSQSSDASEKEKPKEKKSQEELEKELDKELKKGGEPKTKKDDQIHKIGETFKAGHTNFTVNKVDRVQKGEYMNVGGAVNEETKTIKDDEERLIIEVTMENIGEDSISYNFIGFDLRDKNDQSVRPVFSIEEKGRILMGGTLVSGKKVTGVLSYVIPKGEQKHYTLVYNPFLADTNSSNTEERVKDDIDYLVKLD.

Residues 1–19 (MKKVLLLLFVLTIGLALSA) form the signal peptide. Residue Cys-20 is the site of N-palmitoyl cysteine attachment. Cys-20 carries the S-diacylglycerol cysteine lipid modification. The disordered stretch occupies residues 20–62 (CSQSSDASEKEKPKEKKSQEELEKELDKELKKGGEPKTKKDDQ). The span at 26–62 (ASEKEKPKEKKSQEELEKELDKELKKGGEPKTKKDDQ) shows a compositional bias: basic and acidic residues.

The protein resides in the cell membrane. This is an uncharacterized protein from Bacillus subtilis (strain 168).